Consider the following 797-residue polypeptide: Xaa-Pro dipeptidyl-peptidase (797 aa).

Residues Ser-370, Asp-490, and His-521 each act as charge relay system in the active site.

Belongs to the peptidase S15 family. In terms of assembly, homodimer.

It localises to the cytoplasm. The catalysed reaction is Hydrolyzes Xaa-Pro-|- bonds to release unblocked, N-terminal dipeptides from substrates including Ala-Pro-|-p-nitroanilide and (sequentially) Tyr-Pro-|-Phe-Pro-|-Gly-Pro-|-Ile.. Removes N-terminal dipeptides sequentially from polypeptides having unsubstituted N-termini provided that the penultimate residue is proline. This is Xaa-Pro dipeptidyl-peptidase from Lacticaseibacillus casei (strain BL23) (Lactobacillus casei).